We begin with the raw amino-acid sequence, 763 residues long: Autophagy-related protein 18f (763 aa).

WD repeat units lie at residues 345 to 385 (AHKS…STSR) and 402 to 441 (FTNA…EGDA). Residues 701–711 (NESIQSPSTTT) are compositionally biased toward polar residues. Residues 701–763 (NESIQSPSTT…SEDEDEEQVD (63 aa)) form a disordered region. 2 stretches are compositionally biased toward basic and acidic residues: residues 712–725 (QDDK…HGTE) and 741–754 (PVDK…KNHS).

Belongs to the WD repeat PROPPIN family. Component of the PI(3,5)P2 regulatory complex at least composed of ATG18, SAC/FIG4, FAB1 and VAC14. As to expression, expressed in roots, flowers and leaves.

It localises to the preautophagosomal structure membrane. The protein localises to the vacuole membrane. Functionally, the PI(3,5)P2 regulatory complex regulates both the synthesis and turnover of phosphatidylinositol 3,5-bisphosphate (PtdIns(3,5)P2). Required for autophagy. The protein is Autophagy-related protein 18f (ATG18F) of Arabidopsis thaliana (Mouse-ear cress).